The primary structure comprises 312 residues: MNNKHNLALAEQYDQKPLIKTSMLPEVGASQWHAFLTLGFSKTARGTVLKTSDHKGPLYVQKPFYPEGRDTAHIYLLHPPGGLVSGDRLTITANLAENTHVLITTPGAGRVYRARKDKTLQHQITQLNVAENSLMEWLPQETILYPNAHTRLENRIHLANNAKFIGWEITCFGLPANQEDFAQGHAEQGFEIRQNGRLKVRERLVIDDSSRTIFAAKAGLAGKPINGLMIAGPFDLTNASHSASHDELIDSLRKHCAQHNSVSGVSLVGEYIFVRSLHHDSEQVKQLFIQCWREIRPALINKESNEPRIWAT.

Belongs to the UreD family. UreD, UreF and UreG form a complex that acts as a GTP-hydrolysis-dependent molecular chaperone, activating the urease apoprotein by helping to assemble the nickel containing metallocenter of UreC. The UreE protein probably delivers the nickel.

The protein resides in the cytoplasm. Its function is as follows. Required for maturation of urease via the functional incorporation of the urease nickel metallocenter. This is Urease accessory protein UreD from Marinomonas sp. (strain MWYL1).